The following is a 213-amino-acid chain: Orotidine 5'-phosphate decarboxylase (213 aa).

Residues aspartate 9, lysine 31, aspartate 59–threonine 68, serine 115, proline 166–glutamate 176, glycine 191, and arginine 192 each bind substrate. The Proton donor role is filled by lysine 61.

This sequence belongs to the OMP decarboxylase family. Type 1 subfamily. As to quaternary structure, homodimer.

It catalyses the reaction orotidine 5'-phosphate + H(+) = UMP + CO2. It functions in the pathway pyrimidine metabolism; UMP biosynthesis via de novo pathway; UMP from orotate: step 2/2. Functionally, catalyzes the decarboxylation of orotidine 5'-monophosphate (OMP) to uridine 5'-monophosphate (UMP). The sequence is that of Orotidine 5'-phosphate decarboxylase from Methanocaldococcus jannaschii (strain ATCC 43067 / DSM 2661 / JAL-1 / JCM 10045 / NBRC 100440) (Methanococcus jannaschii).